Here is a 578-residue protein sequence, read N- to C-terminus: 15-cis-phytoene desaturase, chloroplastic/chromoplastic (578 aa).

A chloroplast and chromoplast-targeting transit peptide spans 1–87; sequence MDTGCLSSMN…PLENTINFLE (87 aa). Residues alanine 115, 134-135, lysine 142, 159-160, and tyrosine 165 contribute to the FAD site; these read EA and HI. Arginine 300 contributes to the substrate binding site. Residues isoleucine 342 and aspartate 531 each coordinate FAD. Position 539 (alanine 539) interacts with substrate. Methionine 541 contacts FAD.

The protein belongs to the carotenoid/retinoid oxidoreductase family. Homotetramer. Homotetramer is the active form of the enzyme. Requires FAD as cofactor.

It localises to the plastid. It is found in the chloroplast. Its subcellular location is the chromoplast. The protein resides in the membrane. It carries out the reaction 2 a plastoquinone + 15-cis-phytoene = 9,9',15-tri-cis-zeta-carotene + 2 a plastoquinol. It functions in the pathway carotenoid biosynthesis; lycopene biosynthesis. With respect to regulation, inhibited by the herbicide norflurazon (NFZ). Converts phytoene into zeta-carotene via the intermediary of phytofluene by the symmetrical introduction of two double bonds at the C-11 and C-11' positions of phytoene with a concomitant isomerization of two neighboring double bonds at the C9 and C9' positions from trans to cis. Active with decylplastoquinone (DPQ) as substrate. Also active with other benzoquinones, which are strongly preferred over naphthoquinones as substrates. This chain is 15-cis-phytoene desaturase, chloroplastic/chromoplastic (PDS1), found in Oryza sativa subsp. indica (Rice).